Consider the following 147-residue polypeptide: Mitochondrial import receptor subunit TOM20 homolog (147 aa).

Topologically, residues 1-3 (MVV) are mitochondrial intermembrane. The helical transmembrane segment at 4–26 (VGKTSAIAAGVCGALFLGYCIYF) threads the bilayer. Residues 27 to 147 (DRKRRSDPNF…AQNLAEDDVE (121 aa)) are Cytoplasmic-facing.

Belongs to the Tom20 family. As to quaternary structure, forms part of the preprotein translocase complex of the outer mitochondrial membrane (TOM complex). Interacts with tom22.

The protein resides in the mitochondrion outer membrane. Functionally, central component of the receptor complex responsible for the recognition and translocation of cytosolically synthesized mitochondrial preproteins. Together with tom22 functions as the transit peptide receptor at the surface of the mitochondrion outer membrane and facilitates the movement of preproteins into the tom40 translocation pore. This chain is Mitochondrial import receptor subunit TOM20 homolog (tomm20), found in Xenopus tropicalis (Western clawed frog).